A 257-amino-acid polypeptide reads, in one-letter code: Zinc transporter ZupT (257 aa).

The next 3 helical transmembrane spans lie at 5 to 25 (LILTILAGAATFIGAFLGVLG), 32 to 52 (LLAFSLGFAAGIMLLISLMEM), and 61 to 81 (GMSPVLGYGMFIFGLLGYFGL). Residues asparagine 120 and glutamate 123 each coordinate Fe(2+). Residues glutamate 123 and histidine 148 each contribute to the Zn(2+) site. The next 4 helical transmembrane spans lie at 137 to 157 (LGFGIALAVALHNIPEGLAVA), 171 to 191 (ILWAGISGLAEILGGVLAWLI), 195 to 215 (MISPVVMAAIMAAVAGIMVAL), and 236 to 256 (GVLCGMSVMGFSLVLLQTAGI). Residues asparagine 149, glutamate 152, and glutamate 181 each coordinate Fe(2+). A Zn(2+)-binding site is contributed by glutamate 152.

The protein belongs to the ZIP transporter (TC 2.A.5) family. ZupT subfamily.

Its subcellular location is the cell inner membrane. It carries out the reaction Zn(2+)(in) = Zn(2+)(out). In terms of biological role, mediates zinc uptake. May also transport other divalent cations. The chain is Zinc transporter ZupT from Escherichia coli O127:H6 (strain E2348/69 / EPEC).